We begin with the raw amino-acid sequence, 449 residues long: Glucose-6-phosphate isomerase (449 aa).

Glu-291 functions as the Proton donor in the catalytic mechanism. Residues His-312 and Lys-426 contribute to the active site.

It belongs to the GPI family.

It localises to the cytoplasm. The catalysed reaction is alpha-D-glucose 6-phosphate = beta-D-fructose 6-phosphate. Its pathway is carbohydrate biosynthesis; gluconeogenesis. It participates in carbohydrate degradation; glycolysis; D-glyceraldehyde 3-phosphate and glycerone phosphate from D-glucose: step 2/4. Functionally, catalyzes the reversible isomerization of glucose-6-phosphate to fructose-6-phosphate. This Streptococcus equi subsp. zooepidemicus (strain MGCS10565) protein is Glucose-6-phosphate isomerase.